We begin with the raw amino-acid sequence, 90 residues long: DNA-directed RNA polymerase subunit omega (90 aa).

Residues 69-90 form a disordered region; it reads RQEQQEQEAAELAAVSSIARNR.

The protein belongs to the RNA polymerase subunit omega family. As to quaternary structure, the RNAP catalytic core consists of 2 alpha, 1 beta, 1 beta' and 1 omega subunit. When a sigma factor is associated with the core the holoenzyme is formed, which can initiate transcription.

The catalysed reaction is RNA(n) + a ribonucleoside 5'-triphosphate = RNA(n+1) + diphosphate. Its function is as follows. Promotes RNA polymerase assembly. Latches the N- and C-terminal regions of the beta' subunit thereby facilitating its interaction with the beta and alpha subunits. The sequence is that of DNA-directed RNA polymerase subunit omega from Vibrio vulnificus (strain CMCP6).